The sequence spans 401 residues: MGSKVEQQYKLLNAELMDQVQKQRLEIGEYRKRVISLEREIMDIREEHVLQNHRQRMENISIVRSLMLSLNVDSDSLAVRQEPAPAAQINRPSGPRRSSREICKDMRRTCALARTTRPISPRRSSSVTSTVSSTSRRSSAEVQSEVVTTRIPEDRRANKPTPPPRRPAELVFDEDDSDDDFDEAVSPVEETQTEQNEENNRLFSIIEENGSEGESTDSSSSCEAIYCDTTFESSPPNAQVTVTPSGRALREVDTNIPVAVSLSRGKETGKGSWLAISVAVEDSPQEPSIQCPRLAVTRPSQSSGIFPDVNGLTPRRSLFNGIGKMAGSTSTPKSFLVEEMPSIRTRSRTAANKKSENTDMSSSFCNNSARPSRSCRPTSLVEPSLKNKLRNGSKGKAKAKK.

Residues 3 to 49 adopt a coiled-coil conformation; the sequence is SKVEQQYKLLNAELMDQVQKQRLEIGEYRKRVISLEREIMDIREEHV. A disordered region spans residues 82 to 197; it reads EPAPAAQINR…VEETQTEQNE (116 aa). A compositionally biased stretch (basic and acidic residues) spans 98–108; the sequence is SSREICKDMRR. A compositionally biased stretch (low complexity) spans 114-137; the sequence is RTTRPISPRRSSSVTSTVSSTSRR. 3 positions are modified to phosphoserine; by AurB: Ser-124, Ser-125, and Ser-126. The span at 171 to 183 shows a compositional bias: acidic residues; sequence VFDEDDSDDDFDE. Phosphothreonine; by PLK1 is present on Thr-331. Residues 338–401 are disordered; that stretch reads EEMPSIRTRS…GSKGKAKAKK (64 aa). Residues 348 to 377 show a composition bias toward polar residues; sequence RTAANKKSENTDMSSSFCNNSARPSRSCRP. Basic residues predominate over residues 387 to 401; sequence NKLRNGSKGKAKAKK.

Belongs to the shugoshin family. Homodimer. Interacts with Incenp. In terms of processing, phosphorylation by polo-like kinase (PLK) on Thr-331 antagonizes cohesive function. Phosphorylation on Thr-331 at the metaphase anaphase transition leads to its dissociation from centromeres. In contrast, phosphorylation by aurB/ial on either Ser-124, Ser-125 or Ser-126 is required for association with centromeres.

It localises to the chromosome. The protein resides in the centromere. Plays a central role in chromosome cohesion during meiosis and mitosis by preventing premature dissociation of cohesin complex from centromeres after prophase, when most of cohesin complex dissociates from chromosomes arms. May act by protecting or Rad21 from cleavage by Sse/separase. Required during meiosis in both males and females. In Drosophila melanogaster (Fruit fly), this protein is Shugoshin (mei-S332).